A 286-amino-acid chain; its full sequence is Bifunctional protein FolD (286 aa).

Residues 165-167 (GRS) and Ser-190 contribute to the NADP(+) site.

This sequence belongs to the tetrahydrofolate dehydrogenase/cyclohydrolase family. As to quaternary structure, homodimer.

The catalysed reaction is (6R)-5,10-methylene-5,6,7,8-tetrahydrofolate + NADP(+) = (6R)-5,10-methenyltetrahydrofolate + NADPH. It catalyses the reaction (6R)-5,10-methenyltetrahydrofolate + H2O = (6R)-10-formyltetrahydrofolate + H(+). It functions in the pathway one-carbon metabolism; tetrahydrofolate interconversion. Catalyzes the oxidation of 5,10-methylenetetrahydrofolate to 5,10-methenyltetrahydrofolate and then the hydrolysis of 5,10-methenyltetrahydrofolate to 10-formyltetrahydrofolate. This Staphylococcus aureus (strain JH9) protein is Bifunctional protein FolD.